We begin with the raw amino-acid sequence, 283 residues long: Ribosomal RNA small subunit methyltransferase A (283 aa).

Residues N13, L15, G39, E59, D87, and N108 each contribute to the S-adenosyl-L-methionine site.

The protein belongs to the class I-like SAM-binding methyltransferase superfamily. rRNA adenine N(6)-methyltransferase family. RsmA subfamily.

The protein localises to the cytoplasm. The catalysed reaction is adenosine(1518)/adenosine(1519) in 16S rRNA + 4 S-adenosyl-L-methionine = N(6)-dimethyladenosine(1518)/N(6)-dimethyladenosine(1519) in 16S rRNA + 4 S-adenosyl-L-homocysteine + 4 H(+). In terms of biological role, specifically dimethylates two adjacent adenosines (A1518 and A1519) in the loop of a conserved hairpin near the 3'-end of 16S rRNA in the 30S particle. May play a critical role in biogenesis of 30S subunits. In Helicobacter hepaticus (strain ATCC 51449 / 3B1), this protein is Ribosomal RNA small subunit methyltransferase A.